Consider the following 156-residue polypeptide: Putative pre-16S rRNA nuclease (156 aa).

Belongs to the YqgF nuclease family.

The protein resides in the cytoplasm. In terms of biological role, could be a nuclease involved in processing of the 5'-end of pre-16S rRNA. This is Putative pre-16S rRNA nuclease from Bartonella tribocorum (strain CIP 105476 / IBS 506).